Here is a 543-residue protein sequence, read N- to C-terminus: uncharacterized protein (543 aa).

The Radical SAM core domain occupies 203–460; the sequence is NYPYIIAEIE…FLWFKEKVRE (258 aa). Positions 470 to 534 constitute a TRAM domain; it reads VVPKGTILRD…RRSITGKVVR (65 aa).

This is an uncharacterized protein from Methanocaldococcus jannaschii (strain ATCC 43067 / DSM 2661 / JAL-1 / JCM 10045 / NBRC 100440) (Methanococcus jannaschii).